Here is a 138-residue protein sequence, read N- to C-terminus: Phospholipase A2 EC1 (138 aa).

An N-terminal signal peptide occupies residues 1 to 16; that stretch reads MRTLWIVAVWLMSVEG. 7 cysteine pairs are disulfide-bonded: cysteine 42–cysteine 131, cysteine 44–cysteine 60, cysteine 59–cysteine 111, cysteine 65–cysteine 138, cysteine 66–cysteine 104, cysteine 73–cysteine 97, and cysteine 91–cysteine 102. 3 residues coordinate Ca(2+): tyrosine 43, glycine 45, and glycine 47. Residue histidine 63 is part of the active site. Aspartate 64 serves as a coordination point for Ca(2+). Residue aspartate 105 is part of the active site.

Belongs to the phospholipase A2 family. Group II subfamily. The cofactor is Ca(2+).

It localises to the secreted. It catalyses the reaction a 1,2-diacyl-sn-glycero-3-phosphocholine + H2O = a 1-acyl-sn-glycero-3-phosphocholine + a fatty acid + H(+). The chain is Phospholipase A2 EC1 from Echis coloratus (Carpet viper).